A 293-amino-acid polypeptide reads, in one-letter code: 4-hydroxy-3-methylbut-2-enyl diphosphate reductase (293 aa).

Cys12 contributes to the [4Fe-4S] cluster binding site. 2 residues coordinate (2E)-4-hydroxy-3-methylbut-2-enyl diphosphate: His40 and His74. His40 and His74 together coordinate dimethylallyl diphosphate. Residues His40 and His74 each contribute to the isopentenyl diphosphate site. [4Fe-4S] cluster is bound at residue Cys96. A (2E)-4-hydroxy-3-methylbut-2-enyl diphosphate-binding site is contributed by His128. His128 is a binding site for dimethylallyl diphosphate. His128 serves as a coordination point for isopentenyl diphosphate. Glu130 acts as the Proton donor in catalysis. Thr166 is a binding site for (2E)-4-hydroxy-3-methylbut-2-enyl diphosphate. [4Fe-4S] cluster is bound at residue Cys202. Residues Ser230, Ser231, Asn232, and Ser274 each contribute to the (2E)-4-hydroxy-3-methylbut-2-enyl diphosphate site. Positions 230, 231, 232, and 274 each coordinate dimethylallyl diphosphate. Ser230, Ser231, Asn232, and Ser274 together coordinate isopentenyl diphosphate.

The protein belongs to the IspH family. [4Fe-4S] cluster serves as cofactor.

The catalysed reaction is isopentenyl diphosphate + 2 oxidized [2Fe-2S]-[ferredoxin] + H2O = (2E)-4-hydroxy-3-methylbut-2-enyl diphosphate + 2 reduced [2Fe-2S]-[ferredoxin] + 2 H(+). The enzyme catalyses dimethylallyl diphosphate + 2 oxidized [2Fe-2S]-[ferredoxin] + H2O = (2E)-4-hydroxy-3-methylbut-2-enyl diphosphate + 2 reduced [2Fe-2S]-[ferredoxin] + 2 H(+). It functions in the pathway isoprenoid biosynthesis; dimethylallyl diphosphate biosynthesis; dimethylallyl diphosphate from (2E)-4-hydroxy-3-methylbutenyl diphosphate: step 1/1. Its pathway is isoprenoid biosynthesis; isopentenyl diphosphate biosynthesis via DXP pathway; isopentenyl diphosphate from 1-deoxy-D-xylulose 5-phosphate: step 6/6. In terms of biological role, catalyzes the conversion of 1-hydroxy-2-methyl-2-(E)-butenyl 4-diphosphate (HMBPP) into a mixture of isopentenyl diphosphate (IPP) and dimethylallyl diphosphate (DMAPP). Acts in the terminal step of the DOXP/MEP pathway for isoprenoid precursor biosynthesis. The protein is 4-hydroxy-3-methylbut-2-enyl diphosphate reductase of Cytophaga hutchinsonii (strain ATCC 33406 / DSM 1761 / CIP 103989 / NBRC 15051 / NCIMB 9469 / D465).